A 111-amino-acid polypeptide reads, in one-letter code: Ribosome-binding factor A (111 aa).

The protein belongs to the RbfA family. In terms of assembly, monomer. Binds 30S ribosomal subunits, but not 50S ribosomal subunits or 70S ribosomes.

It localises to the cytoplasm. In terms of biological role, one of several proteins that assist in the late maturation steps of the functional core of the 30S ribosomal subunit. Associates with free 30S ribosomal subunits (but not with 30S subunits that are part of 70S ribosomes or polysomes). Required for efficient processing of 16S rRNA. May interact with the 5'-terminal helix region of 16S rRNA. This Helicobacter pylori (strain ATCC 700392 / 26695) (Campylobacter pylori) protein is Ribosome-binding factor A.